The chain runs to 366 residues: Dihydroorotate dehydrogenase (quinone) (366 aa).

FMN is bound by residues 74–78 (AGFDK) and T98. A substrate-binding site is contributed by K78. A substrate-binding site is contributed by 123–127 (NRMGF). N156 and N189 together coordinate FMN. Position 189 (N189) interacts with substrate. The active-site Nucleophile is S192. Substrate is bound at residue N194. K231 and T259 together coordinate FMN. 260-261 (NT) is a substrate binding site. Residues G285, G314, and 335 to 336 (YT) each bind FMN.

It belongs to the dihydroorotate dehydrogenase family. Type 2 subfamily. Monomer. Requires FMN as cofactor.

Its subcellular location is the cell membrane. The catalysed reaction is (S)-dihydroorotate + a quinone = orotate + a quinol. It functions in the pathway pyrimidine metabolism; UMP biosynthesis via de novo pathway; orotate from (S)-dihydroorotate (quinone route): step 1/1. Its function is as follows. Catalyzes the conversion of dihydroorotate to orotate with quinone as electron acceptor. This Kineococcus radiotolerans (strain ATCC BAA-149 / DSM 14245 / SRS30216) protein is Dihydroorotate dehydrogenase (quinone).